A 427-amino-acid polypeptide reads, in one-letter code: 3-isopropylmalate dehydratase large subunit (427 aa).

[4Fe-4S] cluster is bound by residues Cys-308, Cys-368, and Cys-371.

It belongs to the aconitase/IPM isomerase family. LeuC type 2 subfamily. In terms of assembly, heterodimer of LeuC and LeuD. [4Fe-4S] cluster serves as cofactor.

It carries out the reaction (2R,3S)-3-isopropylmalate = (2S)-2-isopropylmalate. It participates in amino-acid biosynthesis; L-leucine biosynthesis; L-leucine from 3-methyl-2-oxobutanoate: step 2/4. Catalyzes the isomerization between 2-isopropylmalate and 3-isopropylmalate, via the formation of 2-isopropylmaleate. The chain is 3-isopropylmalate dehydratase large subunit from Citrifermentans bemidjiense (strain ATCC BAA-1014 / DSM 16622 / JCM 12645 / Bem) (Geobacter bemidjiensis).